The following is a 224-amino-acid chain: ATP synthase subunit b (224 aa).

Residues 2-22 (TPSLGLIFWQSVIFLISFIIL) form a helical membrane-spanning segment.

The protein belongs to the ATPase B chain family. As to quaternary structure, F-type ATPases have 2 components, F(1) - the catalytic core - and F(0) - the membrane proton channel. F(1) has five subunits: alpha(3), beta(3), gamma(1), delta(1), epsilon(1). F(0) has three main subunits: a(1), b(2) and c(10-14). The alpha and beta chains form an alternating ring which encloses part of the gamma chain. F(1) is attached to F(0) by a central stalk formed by the gamma and epsilon chains, while a peripheral stalk is formed by the delta and b chains.

It localises to the cell membrane. F(1)F(0) ATP synthase produces ATP from ADP in the presence of a proton or sodium gradient. F-type ATPases consist of two structural domains, F(1) containing the extramembraneous catalytic core and F(0) containing the membrane proton channel, linked together by a central stalk and a peripheral stalk. During catalysis, ATP synthesis in the catalytic domain of F(1) is coupled via a rotary mechanism of the central stalk subunits to proton translocation. Its function is as follows. Component of the F(0) channel, it forms part of the peripheral stalk, linking F(1) to F(0). The polypeptide is ATP synthase subunit b (Karelsulcia muelleri (strain GWSS) (Sulcia muelleri)).